A 689-amino-acid polypeptide reads, in one-letter code: Glycine--tRNA ligase beta subunit (689 aa).

The protein belongs to the class-II aminoacyl-tRNA synthetase family. Tetramer of two alpha and two beta subunits.

It localises to the cytoplasm. It catalyses the reaction tRNA(Gly) + glycine + ATP = glycyl-tRNA(Gly) + AMP + diphosphate. The chain is Glycine--tRNA ligase beta subunit from Cronobacter sakazakii (strain ATCC BAA-894) (Enterobacter sakazakii).